Consider the following 470-residue polypeptide: Siroheme synthase (470 aa).

A precorrin-2 dehydrogenase /sirohydrochlorin ferrochelatase region spans residues 1–201 (MDYFPIFCQL…NDHVQADQHV (201 aa)). Residues 22-23 (EI) and 43-44 (CE) each bind NAD(+). At serine 128 the chain carries Phosphoserine. Residues 213–470 (GEVVLVGAGP…KVTECVAHVG (258 aa)) are uroporphyrinogen-III C-methyltransferase. Proline 222 contributes to the S-adenosyl-L-methionine binding site. Aspartate 245 acts as the Proton acceptor in catalysis. The Proton donor role is filled by lysine 267. S-adenosyl-L-methionine-binding positions include 298–300 (GGD), isoleucine 303, 328–329 (TA), methionine 379, and glycine 408.

In the N-terminal section; belongs to the precorrin-2 dehydrogenase / sirohydrochlorin ferrochelatase family. It in the C-terminal section; belongs to the precorrin methyltransferase family.

The catalysed reaction is uroporphyrinogen III + 2 S-adenosyl-L-methionine = precorrin-2 + 2 S-adenosyl-L-homocysteine + H(+). It carries out the reaction precorrin-2 + NAD(+) = sirohydrochlorin + NADH + 2 H(+). The enzyme catalyses siroheme + 2 H(+) = sirohydrochlorin + Fe(2+). It functions in the pathway cofactor biosynthesis; adenosylcobalamin biosynthesis; precorrin-2 from uroporphyrinogen III: step 1/1. Its pathway is cofactor biosynthesis; adenosylcobalamin biosynthesis; sirohydrochlorin from precorrin-2: step 1/1. It participates in porphyrin-containing compound metabolism; siroheme biosynthesis; precorrin-2 from uroporphyrinogen III: step 1/1. The protein operates within porphyrin-containing compound metabolism; siroheme biosynthesis; siroheme from sirohydrochlorin: step 1/1. It functions in the pathway porphyrin-containing compound metabolism; siroheme biosynthesis; sirohydrochlorin from precorrin-2: step 1/1. Its function is as follows. Multifunctional enzyme that catalyzes the SAM-dependent methylations of uroporphyrinogen III at position C-2 and C-7 to form precorrin-2 via precorrin-1. Then it catalyzes the NAD-dependent ring dehydrogenation of precorrin-2 to yield sirohydrochlorin. Finally, it catalyzes the ferrochelation of sirohydrochlorin to yield siroheme. In Yersinia pestis, this protein is Siroheme synthase.